The sequence spans 291 residues: Lys-63-specific deubiquitinase BRCC36-like (291 aa).

In terms of domain architecture, MPN spans 12-179 (VYLESDAFLV…YTCFQSVQAS (168 aa)). His-122, His-124, and Asp-135 together coordinate Zn(2+). A JAMM motif motif is present at residues 122–135 (HSHPHITVWPSHVD). Residues 259–286 (LQWLEDRLEQNQQRLQELEQEKEDLMEE) adopt a coiled-coil conformation.

Belongs to the peptidase M67A family. BRCC36 subfamily.

Functionally, metalloprotease that specifically cleaves 'Lys-63'-linked polyubiquitin chains. In Mus musculus (Mouse), this protein is Lys-63-specific deubiquitinase BRCC36-like.